The sequence spans 693 residues: DNA ligase (693 aa).

Residues D35–D39, S84–I85, and E121 contribute to the NAD(+) site. K123 serves as the catalytic N6-AMP-lysine intermediate. R144, E180, K297, and K321 together coordinate NAD(+). Positions 418, 421, 436, and 442 each coordinate Zn(2+). Residues P601–G690 form the BRCT domain.

It belongs to the NAD-dependent DNA ligase family. LigA subfamily. Mg(2+) serves as cofactor. The cofactor is Mn(2+).

The catalysed reaction is NAD(+) + (deoxyribonucleotide)n-3'-hydroxyl + 5'-phospho-(deoxyribonucleotide)m = (deoxyribonucleotide)n+m + AMP + beta-nicotinamide D-nucleotide.. DNA ligase that catalyzes the formation of phosphodiester linkages between 5'-phosphoryl and 3'-hydroxyl groups in double-stranded DNA using NAD as a coenzyme and as the energy source for the reaction. It is essential for DNA replication and repair of damaged DNA. This chain is DNA ligase, found in Azoarcus sp. (strain BH72).